Consider the following 461-residue polypeptide: Argininosuccinate lyase (461 aa).

The protein belongs to the lyase 1 family. Argininosuccinate lyase subfamily.

It localises to the cytoplasm. It carries out the reaction 2-(N(omega)-L-arginino)succinate = fumarate + L-arginine. It functions in the pathway amino-acid biosynthesis; L-arginine biosynthesis; L-arginine from L-ornithine and carbamoyl phosphate: step 3/3. The sequence is that of Argininosuccinate lyase from Shewanella piezotolerans (strain WP3 / JCM 13877).